Reading from the N-terminus, the 678-residue chain is Probable 3',5'-cyclic phosphodiesterase pde-3 (678 aa).

Disordered regions lie at residues 1–27, 52–95, and 223–250; these read MSPGPPAVGGVSPPVMVPGSAPPFQPT, AEMR…VLGG, and TVPAEPNKARSSSYWKTEASPSNNNEHE. A compositionally biased stretch (low complexity) spans 7–19; that stretch reads AVGGVSPPVMVPG. Polar residues-rich tracts occupy residues 60 to 85 and 231 to 246; these read TATSSPASSGVSIQQRRGSTTQNSGV and ARSSSYWKTEASPSNN. Residues 281–632 form the PDEase domain; that stretch reads RYDTRELDTD…RKWKEQIELE (352 aa). Residue histidine 356 is the Proton donor of the active site. Residues histidine 360, histidine 421, aspartate 422, and aspartate 531 each coordinate a divalent metal cation. The tract at residues 654–678 is disordered; sequence EEESASTSDSPDPRRDSPLDSDLSQ.

It belongs to the cyclic nucleotide phosphodiesterase family. Requires a divalent metal cation as cofactor.

It carries out the reaction a nucleoside 3',5'-cyclic phosphate + H2O = a nucleoside 5'-phosphate + H(+). The chain is Probable 3',5'-cyclic phosphodiesterase pde-3 (pde-3) from Caenorhabditis elegans.